The following is a 269-amino-acid chain: Hydroxyethylthiazole kinase (269 aa).

M45 lines the substrate pocket. Residues R121 and T167 each contribute to the ATP site. Substrate is bound at residue G194.

This sequence belongs to the Thz kinase family. Mg(2+) serves as cofactor.

The catalysed reaction is 5-(2-hydroxyethyl)-4-methylthiazole + ATP = 4-methyl-5-(2-phosphooxyethyl)-thiazole + ADP + H(+). It participates in cofactor biosynthesis; thiamine diphosphate biosynthesis; 4-methyl-5-(2-phosphoethyl)-thiazole from 5-(2-hydroxyethyl)-4-methylthiazole: step 1/1. Catalyzes the phosphorylation of the hydroxyl group of 4-methyl-5-beta-hydroxyethylthiazole (THZ). This is Hydroxyethylthiazole kinase from Bacillus licheniformis (strain ATCC 14580 / DSM 13 / JCM 2505 / CCUG 7422 / NBRC 12200 / NCIMB 9375 / NCTC 10341 / NRRL NRS-1264 / Gibson 46).